Reading from the N-terminus, the 172-residue chain is Ribosome maturation factor RimM (172 aa).

One can recognise a PRC barrel domain in the interval 98–171; the sequence is PGEYYYHQIV…KVIVELMEGL (74 aa).

It belongs to the RimM family. As to quaternary structure, binds ribosomal protein uS19.

The protein localises to the cytoplasm. An accessory protein needed during the final step in the assembly of 30S ribosomal subunit, possibly for assembly of the head region. Essential for efficient processing of 16S rRNA. May be needed both before and after RbfA during the maturation of 16S rRNA. It has affinity for free ribosomal 30S subunits but not for 70S ribosomes. The chain is Ribosome maturation factor RimM from Levilactobacillus brevis (strain ATCC 367 / BCRC 12310 / CIP 105137 / JCM 1170 / LMG 11437 / NCIMB 947 / NCTC 947) (Lactobacillus brevis).